The following is a 211-amino-acid chain: Small ribosomal subunit protein uS3 (211 aa).

The region spanning 16–85 (IDEYFKTKLV…NPQIEVKQVE (70 aa)) is the KH type-2 domain.

Belongs to the universal ribosomal protein uS3 family. Part of the 30S ribosomal subunit.

In terms of biological role, binds the lower part of the 30S subunit head. The chain is Small ribosomal subunit protein uS3 from Methanococcus maripaludis (strain C5 / ATCC BAA-1333).